Here is a 168-residue protein sequence, read N- to C-terminus: tRNA-splicing endonuclease (168 aa).

Active-site residues include tyrosine 107, histidine 114, and lysine 145.

Belongs to the tRNA-intron endonuclease family. Archaeal short subfamily. In terms of assembly, homotetramer; although the tetramer contains four active sites, only two participate in the cleavage. Therefore, it should be considered as a dimer of dimers.

It catalyses the reaction pretRNA = a 3'-half-tRNA molecule with a 5'-OH end + a 5'-half-tRNA molecule with a 2',3'-cyclic phosphate end + an intron with a 2',3'-cyclic phosphate and a 5'-hydroxyl terminus.. In terms of biological role, endonuclease that removes tRNA introns. Cleaves pre-tRNA at the 5'- and 3'-splice sites to release the intron. The products are an intron and two tRNA half-molecules bearing 2',3' cyclic phosphate and 5'-OH termini. Recognizes a pseudosymmetric substrate in which 2 bulged loops of 3 bases are separated by a stem of 4 bp. The sequence is that of tRNA-splicing endonuclease from Thermococcus gammatolerans (strain DSM 15229 / JCM 11827 / EJ3).